Consider the following 243-residue polypeptide: UPF0246 protein SUB1767 (243 aa).

Belongs to the UPF0246 family.

This chain is UPF0246 protein SUB1767, found in Streptococcus uberis (strain ATCC BAA-854 / 0140J).